Consider the following 148-residue polypeptide: Small ribosomal subunit protein uS7c (148 aa).

Belongs to the universal ribosomal protein uS7 family. Part of the 30S ribosomal subunit.

Its subcellular location is the plastid. The protein localises to the chloroplast. Functionally, one of the primary rRNA binding proteins, it binds directly to 16S rRNA where it nucleates assembly of the head domain of the 30S subunit. The polypeptide is Small ribosomal subunit protein uS7c (rps7) (Cyanidioschyzon merolae (strain NIES-3377 / 10D) (Unicellular red alga)).